The chain runs to 499 residues: Lysine--tRNA ligase (499 aa).

Mg(2+) is bound by residues Glu408 and Glu415.

The protein belongs to the class-II aminoacyl-tRNA synthetase family. In terms of assembly, homodimer. It depends on Mg(2+) as a cofactor.

It is found in the cytoplasm. The catalysed reaction is tRNA(Lys) + L-lysine + ATP = L-lysyl-tRNA(Lys) + AMP + diphosphate. The chain is Lysine--tRNA ligase from Agrobacterium fabrum (strain C58 / ATCC 33970) (Agrobacterium tumefaciens (strain C58)).